The chain runs to 147 residues: UPF0208 membrane protein SO_2914 (147 aa).

Transmembrane regions (helical) follow at residues 40–60 and 68–88; these read LAILVMPVLAVLASVSQLYTY and ALTIALFFISLPLQGLLWLGW.

This sequence belongs to the UPF0208 family.

The protein resides in the cell inner membrane. The polypeptide is UPF0208 membrane protein SO_2914 (Shewanella oneidensis (strain ATCC 700550 / JCM 31522 / CIP 106686 / LMG 19005 / NCIMB 14063 / MR-1)).